The sequence spans 133 residues: Alpha-amylase inhibitor/endochitinase (133 aa).

E30 functions as the Proton donor in the catalytic mechanism.

The protein belongs to the glycosyl hydrolase 19 family. Chitinase class I subfamily.

It carries out the reaction Random endo-hydrolysis of N-acetyl-beta-D-glucosaminide (1-&gt;4)-beta-linkages in chitin and chitodextrins.. Functionally, this protein functions both as an alpha-amylase inhibitor and as a chitinase. The polypeptide is Alpha-amylase inhibitor/endochitinase (Coix lacryma-jobi (Job's tears)).